Consider the following 132-residue polypeptide: Small ribosomal subunit protein uS9 (132 aa).

Belongs to the universal ribosomal protein uS9 family.

This chain is Small ribosomal subunit protein uS9, found in Leptospira interrogans serogroup Icterohaemorrhagiae serovar copenhageni (strain Fiocruz L1-130).